Reading from the N-terminus, the 382-residue chain is Protein RecA (382 aa).

79–86 provides a ligand contact to ATP; the sequence is GPESSGKT.

This sequence belongs to the RecA family.

It is found in the cytoplasm. Its function is as follows. Can catalyze the hydrolysis of ATP in the presence of single-stranded DNA, the ATP-dependent uptake of single-stranded DNA by duplex DNA, and the ATP-dependent hybridization of homologous single-stranded DNAs. It interacts with LexA causing its activation and leading to its autocatalytic cleavage. The sequence is that of Protein RecA from Streptococcus sanguinis (strain SK36).